We begin with the raw amino-acid sequence, 455 residues long: Transmembrane protease serine 5 (455 aa).

Residues 1–49 (MSPTLDDQSPMEIRCTEEGAGPGIFRMELGDQRQSISQSQRWCCLQRGC) lie on the Cytoplasmic side of the membrane. The chain crosses the membrane as a helical; Signal-anchor for type II membrane protein span at residues 50–70 (VILGVLGLLAGAGIASWLLVL). Over 71 to 455 (YLWPAASPSI…DWIHDTVQVR (385 aa)) the chain is Extracellular. In terms of domain architecture, SRCR spans 112 to 207 (FRINGEDLLL…SGRIVSLKCS (96 aa)). Cystine bridges form between Cys135–Cys196, Cys148–Cys206, Cys209–Cys328, Cys243–Cys259, Cys342–Cys411, Cys374–Cys390, and Cys401–Cys429. Residues Asn163 and Asn170 are each glycosylated (N-linked (GlcNAc...) asparagine). The 236-residue stretch at 218-453 (IVGGQAVASG…FLDWIHDTVQ (236 aa)) folds into the Peptidase S1 domain. Catalysis depends on charge relay system residues His258 and Asp308. N-linked (GlcNAc...) asparagine glycosylation is found at Asn319 and Asn375. Ser405 serves as the catalytic Charge relay system.

This sequence belongs to the peptidase S1 family.

The protein localises to the cell membrane. May play a role in hearing. This chain is Transmembrane protease serine 5 (Tmprss5), found in Mus musculus (Mouse).